The sequence spans 113 residues: Hydrogenase maturation factor HypA (113 aa).

H2 is a binding site for Ni(2+). 4 residues coordinate Zn(2+): C73, C76, C89, and C92.

It belongs to the HypA/HybF family.

Involved in the maturation of [NiFe] hydrogenases. Required for nickel insertion into the metal center of the hydrogenase. The protein is Hydrogenase maturation factor HypA of Picosynechococcus sp. (strain ATCC 27264 / PCC 7002 / PR-6) (Agmenellum quadruplicatum).